Reading from the N-terminus, the 242-residue chain is Small ribosomal subunit protein uS2 (242 aa).

It belongs to the universal ribosomal protein uS2 family.

The sequence is that of Small ribosomal subunit protein uS2 from Aeromonas salmonicida (strain A449).